The chain runs to 207 residues: CASP-like protein 1D1 (207 aa).

Residues methionine 1–asparagine 40 are Cytoplasmic-facing. A helical membrane pass occupies residues leucine 41–alanine 61. Over lysine 62–proline 89 the chain is Extracellular. The helical transmembrane segment at alanine 90–isoleucine 110 threads the bilayer. The Cytoplasmic segment spans residues serine 111–lysine 124. Residues threonine 125–glycine 145 traverse the membrane as a helical segment. Residues threonine 146–histidine 176 lie on the Extracellular side of the membrane. Residues isoleucine 177 to leucine 197 traverse the membrane as a helical segment. Over asparagine 198–arginine 207 the chain is Cytoplasmic.

This sequence belongs to the Casparian strip membrane proteins (CASP) family. Homodimer and heterodimers.

It localises to the cell membrane. The chain is CASP-like protein 1D1 from Oryza sativa subsp. japonica (Rice).